Reading from the N-terminus, the 696-residue chain is Lutropin-choriogonadotropic hormone receptor (696 aa).

Positions 1–27 (MRRRSLALRLLLALLLLPPPLPQTLLG) are cleaved as a signal peptide. The Extracellular segment spans residues 28-358 (APCPEPCSCR…AFNPCEDIMG (331 aa)). Asn99 carries an N-linked (GlcNAc...) asparagine glycan. LRR repeat units lie at residues 122–147 (LPRL…IFSS), 149–171 (FNFI…AFQG), 172–196 (MNNE…AFNG), 198–220 (TLIS…AFRG), 221–244 (ARGP…GLES), and 250–271 (ATSS…LLDA). Asn174 and Asn195 each carry an N-linked (GlcNAc...) asparagine glycan. Residues Asn291, Asn299, and Asn313 are each glycosylated (N-linked (GlcNAc...) asparagine). Tyr331 carries the sulfotyrosine modification. A helical membrane pass occupies residues 359-386 (YDFLRVLIWLINILAIMGNVTVLFVLLT). At 387-395 (SHYKLTVPR) the chain is on the cytoplasmic side. A helical membrane pass occupies residues 396–418 (FLMCNLSFADFCMGLYLLLIASV). Over 419–439 (DAQTKGQYYNHAIDWQTGNGC) the chain is Extracellular. Cys439 and Cys514 are disulfide-bonded. Residues 440–462 (SVAGFFTVFASELSVYTLTVITL) form a helical membrane-spanning segment. Over 463-482 (ERWHTITYAIQLDQKLRLRH) the chain is Cytoplasmic. Residues 483–505 (AIPIMLGGWLFSTLIAMLPLVGV) form a helical membrane-spanning segment. Over 506–525 (SSYMKVSICLPMDVETTLSQ) the chain is Extracellular. A helical transmembrane segment spans residues 526–547 (VYILTILILNVVAFIIICACYI). Residues 548–570 (KIYFAVQNPELMATNKDTKIAKK) lie on the Cytoplasmic side of the membrane. Residues 571 to 594 (MAVLIFTDFTCMAPISFFAISAAL) traverse the membrane as a helical segment. The Extracellular portion of the chain corresponds to 595–605 (KVPLITVTNSK). The chain crosses the membrane as a helical span at residues 606-626 (VLLVLFYPVNSCANPFLYAIF). Residues 627–696 (TKAFRRDFFL…VMDKTCYKDC (70 aa)) are Cytoplasmic-facing. S-palmitoyl cysteine attachment occurs at residues Cys643 and Cys644.

Belongs to the G-protein coupled receptor 1 family. FSH/LSH/TSH subfamily. Sulfated.

The protein resides in the cell membrane. In terms of biological role, receptor for lutropin-choriogonadotropic hormone. The activity of this receptor is mediated by G proteins which activate adenylate cyclase. The chain is Lutropin-choriogonadotropic hormone receptor (LHCGR) from Sus scrofa (Pig).